Reading from the N-terminus, the 782-residue chain is Fibrinogen alpha chain (782 aa).

The signal sequence occupies residues 1–19 (MLSLRVACLILSLASTVWT). Positions 68–547 (GCRMKGLIDE…KRGRARTMRD (480 aa)) form a coiled coil. A compositionally biased stretch (basic and acidic residues) spans 264–283 (RPGKDGASRGDLPGDSRGDS). Residues 264 to 374 (RPGKDGASRG…PATRKEYHTG (111 aa)) form a disordered region. Position 279 is a phosphoserine (S279). The span at 311–323 (SGSGSDGNWGSGT) shows a compositional bias: gly residues. Composition is skewed to low complexity over residues 324 to 344 (TGSD…SGSG) and 354 to 364 (GEFSEFGGSSS). The residue at position 326 (S326) is a Phosphoserine. A disulfide bond links C404 and C434. A Phosphoserine modification is found at S470. P499 is subject to 4-hydroxyproline; by P4HA1. Over residues 522–536 (DEAASEAHQEGDTRT) the composition is skewed to basic and acidic residues. Positions 522–542 (DEAASEAHQEGDTRTTKRGRA) are disordered. A Phosphoserine modification is found at S526. The 242-residue stretch at 539-780 (RGRARTMRDC…AVRMKIRPLV (242 aa)) folds into the Fibrinogen C-terminal domain. N-linked (GlcNAc...) asparagine glycosylation occurs at N602. Positions 707, 709, 711, and 713 each coordinate Ca(2+). Cysteines 715 and 728 form a disulfide.

In terms of assembly, heterohexamer; disulfide linked. Contains 2 sets of 3 non-identical chains (alpha, beta and gamma). The 2 heterotrimers are in head to head conformation with the N-termini in a small central domain. Post-translationally, conversion of fibrinogen to fibrin is triggered by thrombin, which cleaves fibrinopeptides A and B from alpha and beta chains, and thus exposes the N-terminal polymerization sites responsible for the formation of the soft clot. The soft clot is converted into the hard clot by factor XIIIA which catalyzes the epsilon-(gamma-glutamyl)lysine cross-linking between gamma chains (stronger) and between alpha chains (weaker) of different monomers. Forms F13A-mediated cross-links between a glutamine and the epsilon-amino group of a lysine residue, forming fibronectin-fibrinogen heteropolymers. In terms of processing, phosphorylated by FAM20C in the extracellular medium.

Its subcellular location is the secreted. Functionally, cleaved by the protease thrombin to yield monomers which, together with fibrinogen beta (FGB) and fibrinogen gamma (FGG), polymerize to form an insoluble fibrin matrix. Fibrin has a major function in hemostasis as one of the primary components of blood clots. In addition, functions during the early stages of wound repair to stabilize the lesion and guide cell migration during re-epithelialization. Was originally thought to be essential for platelet aggregation, based on in vitro studies using anticoagulated blood. However, subsequent studies have shown that it is not absolutely required for thrombus formation in vivo. Enhances expression of SELP in activated platelets via an ITGB3-dependent pathway. Maternal fibrinogen is essential for successful pregnancy. Fibrin deposition is also associated with infection, where it protects against IFNG-mediated hemorrhage. May also facilitate the immune response via both innate and T-cell mediated pathways. The chain is Fibrinogen alpha chain (Fga) from Rattus norvegicus (Rat).